The chain runs to 322 residues: tRNA-dihydrouridine synthase B (322 aa).

FMN contacts are provided by residues 16-18 and glutamine 70; that span reads PMA. The active-site Proton donor is the cysteine 100. FMN is bound by residues lysine 139, 200–202, and 224–225; these read NGD and GR.

Belongs to the Dus family. DusB subfamily. FMN is required as a cofactor.

It catalyses the reaction a 5,6-dihydrouridine in tRNA + NAD(+) = a uridine in tRNA + NADH + H(+). The catalysed reaction is a 5,6-dihydrouridine in tRNA + NADP(+) = a uridine in tRNA + NADPH + H(+). Functionally, catalyzes the synthesis of 5,6-dihydrouridine (D), a modified base found in the D-loop of most tRNAs, via the reduction of the C5-C6 double bond in target uridines. In Vibrio vulnificus (strain CMCP6), this protein is tRNA-dihydrouridine synthase B.